The sequence spans 156 residues: SPbeta prophage-derived uncharacterized protein YorH (156 aa).

The protein is SPbeta prophage-derived uncharacterized protein YorH (yorH) of Bacillus subtilis (strain 168).